A 462-amino-acid chain; its full sequence is Glutamate--tRNA ligase 1 (462 aa).

The 'HIGH' region signature appears at 8-18; it reads PSPTGYLHIGG. A 'KMSKS' region motif is present at residues 237–241; sequence KLSKR. Residue Lys240 participates in ATP binding.

It belongs to the class-I aminoacyl-tRNA synthetase family. Glutamate--tRNA ligase type 1 subfamily. As to quaternary structure, monomer.

The protein resides in the cytoplasm. The catalysed reaction is tRNA(Glu) + L-glutamate + ATP = L-glutamyl-tRNA(Glu) + AMP + diphosphate. In terms of biological role, catalyzes the attachment of glutamate to tRNA(Glu) in a two-step reaction: glutamate is first activated by ATP to form Glu-AMP and then transferred to the acceptor end of tRNA(Glu). The polypeptide is Glutamate--tRNA ligase 1 (Sulfurimonas denitrificans (strain ATCC 33889 / DSM 1251) (Thiomicrospira denitrificans (strain ATCC 33889 / DSM 1251))).